A 308-amino-acid chain; its full sequence is Olfactory receptor 13H1 (308 aa).

Topologically, residues 1–25 (MAMDNVTAVFQFLLIGISNYPQWRD) are extracellular. Residue asparagine 5 is glycosylated (N-linked (GlcNAc...) asparagine). A helical transmembrane segment spans residues 26–46 (TFFTLVLIIYLSTLLGNGFMI). Over 47–54 (FLIHFDPN) the chain is Cytoplasmic. The helical transmembrane segment at 55-75 (LHTPIYFFLSNLSFLDLCYGT) threads the bilayer. Over 76 to 99 (ASMPQALVHCFSTHPYLSYPRCLA) the chain is Extracellular. Cysteine 97 and cysteine 188 are disulfide-bonded. A helical membrane pass occupies residues 100 to 120 (QTSVSLALATAECLLLAAMAY). The Cytoplasmic portion of the chain corresponds to 121 to 139 (DRVVAISNPLRYSVVMNGP). Residues 140–159 (VCVCLVATSWGTSLVLTAML) traverse the membrane as a helical segment. Residues 160 to 196 (ILSLRLHFCGANVINHFACEILSLIKLTCSDTSLNEF) are Extracellular-facing. A helical transmembrane segment spans residues 197-216 (MILITSIFTLLLPFGFVLLS). At 217–236 (YIRIAMAIIRIRSLQGRLKA) the chain is on the cytoplasmic side. The helical transmembrane segment at 237–257 (FTTCGSHLTVVTIFYGSAISM) threads the bilayer. Residues 258–270 (YMKTQSKSYPDQD) lie on the Extracellular side of the membrane. A helical membrane pass occupies residues 271–291 (KFISVFYGALTPMLNPLIYSL). Residues 292 to 308 (RKKDVKRAIRKVMLKRT) are Cytoplasmic-facing.

The protein belongs to the G-protein coupled receptor 1 family.

Its subcellular location is the cell membrane. Functionally, odorant receptor. This is Olfactory receptor 13H1 (OR13H1) from Homo sapiens (Human).